The following is a 149-amino-acid chain: Endoribonuclease YbeY (149 aa).

Zn(2+) is bound by residues His115, His119, and His125.

Belongs to the endoribonuclease YbeY family. Zn(2+) is required as a cofactor.

The protein resides in the cytoplasm. Functionally, single strand-specific metallo-endoribonuclease involved in late-stage 70S ribosome quality control and in maturation of the 3' terminus of the 16S rRNA. This is Endoribonuclease YbeY from Mycoplasmopsis pulmonis (strain UAB CTIP) (Mycoplasma pulmonis).